Reading from the N-terminus, the 1443-residue chain is DNA polymerase III PolC-type (1443 aa).

The Exonuclease domain occupies 408 to 567 (FVIFDIETTG…YDTQALKKVF (160 aa)).

The protein belongs to the DNA polymerase type-C family. PolC subfamily.

Its subcellular location is the cytoplasm. It catalyses the reaction DNA(n) + a 2'-deoxyribonucleoside 5'-triphosphate = DNA(n+1) + diphosphate. In terms of biological role, required for replicative DNA synthesis. This DNA polymerase also exhibits 3' to 5' exonuclease activity. The protein is DNA polymerase III PolC-type of Mycoplasma pneumoniae (strain ATCC 29342 / M129 / Subtype 1) (Mycoplasmoides pneumoniae).